The primary structure comprises 563 residues: Efflux pump notK (563 aa).

A disordered region spans residues 1-32 (MTKDEDSGTTDGGYSTPDIAVQEKQDQPPAPE). The next 14 membrane-spanning stretches (helical) occupy residues 48–68 (IFLS…AIPG), 78–98 (DVGW…PMWG), 108–128 (LVYL…AAAP), 138–158 (ALQG…ISYV), 165–185 (AMLI…GPLL), 197–217 (WCFW…VLFF), 239–259 (LPGF…LQWG), 270–290 (VIAT…VEWI), 312–332 (LYGW…PIYF), 345–365 (VNSL…GFLI), 374–394 (YEFA…TLDI), 406–426 (VIFG…LESF), 438–458 (VMLM…QSIF), and 509–529 (VFAF…AIPF). Positions 538–563 (GPSNGQEEEEGKKDGPAEKKEDEVAV) are disordered. Over residues 547–563 (EGKKDGPAEKKEDEVAV) the composition is skewed to basic and acidic residues.

This sequence belongs to the major facilitator superfamily. TCR/Tet family.

It is found in the cell membrane. Efflux pump; part of the gene cluster that mediates the biosynthesis of notoamide, a fungal indole alkaloid that belongs to a family of natural products containing a characteristic bicyclo[2.2.2]diazaoctane core. The protein is Efflux pump notK of Aspergillus sp. (strain MF297-2).